The following is a 406-amino-acid chain: Tyrosine-protein phosphatase non-receptor type 2 (406 aa).

In terms of domain architecture, Tyrosine-protein phosphatase spans 5-275 (IEREFEELDA…RFSYMAIIEG (271 aa)). Position 22 is a phosphotyrosine (Tyr-22). Ser-52 is modified (phosphoserine). Tyr-68 is modified (phosphotyrosine). Residues Asp-182, 216-222 (CSAGIGR), and Gln-260 contribute to the substrate site. The active-site Phosphocysteine intermediate is the Cys-216. Cys-216 is subject to S-nitrosocysteine. Residues Ser-293, Ser-298, Ser-304, Ser-320, and Ser-339 each carry the phosphoserine modification. Residues 341–406 (ESILRKRIRE…ALVGWTLLFH (66 aa)) are endoplasmic reticulum location. The tract at residues 371–406 (ERKRKRWLYWQPILTKMGFVSVILVGALVGWTLLFH) is mediates interaction with STX17.

Belongs to the protein-tyrosine phosphatase family. Non-receptor class 1 subfamily. As to quaternary structure, interacts with RMDN3. Isoform 1 interacts with TMED9. Isoform 1 interacts with STX17; dephosphorylates STX17. Interacts with ITGA1 (via cytoplasmic domain); activates the phosphatase activity towards EGFR. Interacts with TRAF2; probably involved in tumor necrosis factor-mediated signaling. Interacts with MET. Interacts with FAM220A and STAT3; interaction with FAM220A promotes interaction of PTPN2 with transcriptional activator STAT3, leading to dephosphorylation of STAT3 by PTPN2 and negative regulation of STAT3 transcriptional activator activity. In terms of processing, specifically phosphorylated in a cell cycle-dependent manner by cyclin-dependent kinases CDK1 and CDK2. Probably activated through phosphorylation by PKR. As to expression, ubiquitously expressed. The highest expression levels were found in ovary, testis, thymus and kidney.

It is found in the endoplasmic reticulum. The protein localises to the endoplasmic reticulum-Golgi intermediate compartment. Its subcellular location is the nucleus. It localises to the cytoplasm. The protein resides in the cell membrane. It catalyses the reaction O-phospho-L-tyrosyl-[protein] + H2O = L-tyrosyl-[protein] + phosphate. In terms of biological role, non-receptor type tyrosine-specific phosphatase that dephosphorylates receptor protein tyrosine kinases including INSR, EGFR, CSF1R, PDGFR. Also dephosphorylates non-receptor protein tyrosine kinases like JAK1, JAK2, JAK3, Src family kinases, STAT1, STAT3 and STAT6 either in the nucleus or the cytoplasm. Negatively regulates numerous signaling pathways and biological processes like hematopoiesis, inflammatory response, cell proliferation and differentiation, and glucose homeostasis. Plays a multifaceted and important role in the development of the immune system. Functions in T-cell receptor signaling through dephosphorylation of FYN and LCK to control T-cells differentiation and activation. Dephosphorylates CSF1R, negatively regulating its downstream signaling and macrophage differentiation. Negatively regulates cytokine (IL2/interleukin-2 and interferon)-mediated signaling through dephosphorylation of the cytoplasmic kinases JAK1, JAK3 and their substrate STAT1, that propagate signaling downstream of the cytokine receptors. Also regulates the IL6/interleukin-6 and IL4/interleukin-4 cytokine signaling through dephosphorylation of STAT3 and STAT6 respectively. In addition to the immune system, it is involved in anchorage-dependent, negative regulation of EGF-stimulated cell growth. Activated by the integrin ITGA1/ITGB1, it dephosphorylates EGFR and negatively regulates EGF signaling. Dephosphorylates PDGFRB and negatively regulates platelet-derived growth factor receptor-beta signaling pathway and therefore cell proliferation. Negatively regulates tumor necrosis factor-mediated signaling downstream via MAPK through SRC dephosphorylation. May also regulate the hepatocyte growth factor receptor signaling pathway through dephosphorylation of the hepatocyte growth factor receptor MET. Also plays an important role in glucose homeostasis. For instance, negatively regulates the insulin receptor signaling pathway through the dephosphorylation of INSR and control gluconeogenesis and liver glucose production through negative regulation of the IL6 signaling pathways. May also bind DNA. The protein is Tyrosine-protein phosphatase non-receptor type 2 (Ptpn2) of Mus musculus (Mouse).